The chain runs to 862 residues: Taxadiene synthase (862 aa).

Residues Asp-613, Asp-617, Asn-757, Thr-761, and Glu-765 each coordinate Mg(2+). Positions 613 to 617 (DDMAD) match the DDXXD motif motif.

It belongs to the terpene synthase family. It depends on Mg(2+) as a cofactor.

The enzyme catalyses (2E,6E,10E)-geranylgeranyl diphosphate = taxa-4(5),11(12)-diene + diphosphate. It functions in the pathway alkaloid biosynthesis; taxol biosynthesis; taxa-4(20),11-dien-5alpha-ol from geranylgeranyl diphosphate: step 1/2. In terms of biological role, catalyzes the cyclization of the ubiquitous isoprenoid intermediate geranylgeranyl diphosphate to taxa-4,11-diene, the parent olefin with a taxane skeleton. In Taxus brevifolia (Pacific yew), this protein is Taxadiene synthase (TDC1).